A 766-amino-acid polypeptide reads, in one-letter code: MSEQLGSHITTPSSHDDASKDKRPAAEVVNGSGIFIMADLHTGKPITLKCGLTLPNRLVKAATAESMAPNNTLPDEKFQNLYRHWAEGGWGMVLAGNVQVDANHICTATDLSVDHSLSDSKIVEAWRPWAAACNGNGTVTVMQLCHPGRQSPAGAGKRGLFAKSIAPSAVALQMGSGLVAKAVTALLFGTPREMSVSDIETVVSQFARSARLAAESGFAGVEVHAGHGFLLEQFLSTKSNRRTDAYGGTPAKRARIVVEVLTAIRAVVPAGFCVGLSLNSVDLQSQTELKDCVEQVKLITDAGVDFIEVSGGTFENPTMFLGPEKSRKQAQLGQPLAHEPFFLDFAKAIRPHVPGVPLIVTGGFRSCQGIEETIAGGDADLVGLARPAVVNPLLPKTTVLSPKTTEFGPEIEDGDVTLYAKKTEAPWILKQIGIRAVEVHIDNSVYHNRRHAAKQVRRASVLLQFPSRPSLSVAAVDIDNVISRLSTARPFVFIFLAITVEVNIDTDIAALLLALRPSPELYHLAAAMPPRRSDGSADHDVPDWPKTPHPTPYDILAMRKDDPYTKHRFFQLVKIYHPDRHGHTPAVHRLPHATRLERYRLIVAANDLLSNPSKRSLYDTQGVGWTGDRPPTLNESVRHAEKSWRHQPGNASRNATWEDWERWYDARDGKTRDPMYMSNGVFATLVVMMCMIGAFAQMSRAEQSGTEYLETRDQSNLAIGQQISRTTLVSAGRSKDERVDSFLRERENVAYEFTPSKYDDRTRTEA.

Positions 1–13 are enriched in polar residues; sequence MSEQLGSHITTPS. Residues 1–24 form a disordered region; the sequence is MSEQLGSHITTPSSHDDASKDKRP. Over residues 14–24 the composition is skewed to basic and acidic residues; it reads SHDDASKDKRP. N-linked (GlcNAc...) asparagine glycosylation occurs at Asn-30. 61–64 is an FMN binding site; the sequence is AATA. 2 N-linked (GlcNAc...) asparagine glycosylation sites follow: Asn-70 and Asn-136. Residue Gln-143 participates in FMN binding. 224-227 contacts substrate; it reads HAGH. 385–386 provides a ligand contact to FMN; the sequence is AR. Positions 551 to 622 constitute a J domain; it reads TPYDILAMRK…SKRSLYDTQG (72 aa). Asn-634, Asn-650, and Asn-654 each carry an N-linked (GlcNAc...) asparagine glycan. The helical transmembrane segment at 675 to 695 threads the bilayer; sequence MYMSNGVFATLVVMMCMIGAF.

It belongs to the NADH:flavin oxidoreductase/NADH oxidase family.

It is found in the membrane. In terms of biological role, NADH-dependent flavin oxidoreductase; part of the gene cluster that mediates the biosynthesis of ilicicolin H, a 4-hydroxy-2-pyridonealkaloid that has potent and broad antifungal activities by inhibiting the mitochondrial respiration chain. The biosynthesis of ilicicolin H starts with formation of the tetramic acid by the hybrid PKS-NRPS synthetase iliA with the partnering trans-enoyl reductase iliB since iliA lacks a designated enoylreductase (ER) domain. The cytochrome P450 monooxygenase iliC then catalyzes the ring expansion of the tetramate to the acyclic 2-pyridone. The pericyclase iliD further converts the acyclic 2-pyridone into 8-epi-ilicicolin H. 8-epi-ilicicolin H might then spontaneously convert to ilicicolin H since ilicicolin H is produced in the absence of the epimerase iliE, in contrast to what was observed for the Talaromyces variabilis ilicolin H biosynthetic pathway. This chain is NADH-dependent flavin oxidoreductase iliE, found in Neonectria sp. (strain DH2).